Reading from the N-terminus, the 283-residue chain is Pantothenate synthetase (283 aa).

30-37 contributes to the ATP binding site; it reads MGCLHEGH. His37 (proton donor) is an active-site residue. Gln61 is a (R)-pantoate binding site. Residue Gln61 participates in beta-alanine binding. 147 to 150 contributes to the ATP binding site; the sequence is GQKD. (R)-pantoate is bound at residue Gln153. ATP-binding positions include Val176 and 184–187; that span reads KSSR.

The protein belongs to the pantothenate synthetase family. As to quaternary structure, homodimer.

It localises to the cytoplasm. It carries out the reaction (R)-pantoate + beta-alanine + ATP = (R)-pantothenate + AMP + diphosphate + H(+). It participates in cofactor biosynthesis; (R)-pantothenate biosynthesis; (R)-pantothenate from (R)-pantoate and beta-alanine: step 1/1. Its function is as follows. Catalyzes the condensation of pantoate with beta-alanine in an ATP-dependent reaction via a pantoyl-adenylate intermediate. The polypeptide is Pantothenate synthetase (Clostridium novyi (strain NT)).